The primary structure comprises 100 residues: Small ribosomal subunit protein uS14c (100 aa).

This sequence belongs to the universal ribosomal protein uS14 family. As to quaternary structure, part of the 30S ribosomal subunit.

The protein resides in the plastid. It localises to the chloroplast. Binds 16S rRNA, required for the assembly of 30S particles. The sequence is that of Small ribosomal subunit protein uS14c from Angiopteris evecta (Mule's foot fern).